We begin with the raw amino-acid sequence, 231 residues long: Large ribosomal subunit protein uL1 (231 aa).

It belongs to the universal ribosomal protein uL1 family. As to quaternary structure, part of the 50S ribosomal subunit.

In terms of biological role, binds directly to 23S rRNA. The L1 stalk is quite mobile in the ribosome, and is involved in E site tRNA release. Protein L1 is also a translational repressor protein, it controls the translation of the L11 operon by binding to its mRNA. This Ralstonia pickettii (strain 12J) protein is Large ribosomal subunit protein uL1.